The chain runs to 219 residues: Small ribosomal subunit protein uS3 (219 aa).

One can recognise a KH type-2 domain in the interval 38-106; it reads IRKYINTKLA…KVHINIVEIK (69 aa).

It belongs to the universal ribosomal protein uS3 family. In terms of assembly, part of the 30S ribosomal subunit. Forms a tight complex with proteins S10 and S14.

Functionally, binds the lower part of the 30S subunit head. Binds mRNA in the 70S ribosome, positioning it for translation. This chain is Small ribosomal subunit protein uS3, found in Latilactobacillus sakei subsp. sakei (strain 23K) (Lactobacillus sakei subsp. sakei).